The sequence spans 447 residues: Putative bacteriocin-SkfA transport system permease protein SkfF (447 aa).

Over 1 to 3 (MPF) the chain is Cytoplasmic. A helical membrane pass occupies residues 4–22 (LIMLLFVGAIGFQVSFVSR). Residues 23 to 29 (STTWDMS) lie on the Extracellular side of the membrane. Residues 30-50 (IAGWVLTGVFILYTAFGLFSN) traverse the membrane as a helical segment. At 51-59 (RLPSQMADI) the chain is on the cytoplasmic side. A helical membrane pass occupies residues 60–80 (IWLYGTATSFSKVVYSVLFFS). The Extracellular segment spans residues 81–85 (VTWKA). A helical transmembrane segment spans residues 86-104 (LLWIISAIFGDVLIVLLSG). Topologically, residues 105–113 (DHINLLGRS) are cytoplasmic. Residues 114–134 (IIFVGLFFIAEVWLMSVSCAR) form a helical membrane-spanning segment. Residues 135-141 (TVKKMKR) lie on the Extracellular side of the membrane. The chain crosses the membrane as a helical span at residues 142–160 (VYVLVFLLMLGIYSICLYR). Topologically, residues 161–189 (FFFLQHSSGIWESIARFISGVGLVFDTLS) are cytoplasmic. The helical transmembrane segment at 190-208 (PLYVVVFIGIITVSFMTIA) threads the bilayer. Residues 209–247 (FTSRQVEMKESLVKEAEFWEEFQERQFGSGQIIQKPKTT) lie on the Extracellular side of the membrane. The chain crosses the membrane as a helical span at residues 248-268 (WWGLQGLNGIWSFLWLELLLF). Over 269–297 (KKYLFFHSIHTVMLSGVFYVVIFMYPEWF) the chain is Cytoplasmic. Residues 298 to 318 (YLLFFLIVSAVMLSSYYSGIV) form a helical membrane-spanning segment. At 319 to 341 (RHSQSGTLHLFPGALWKKIIILE) the chain is on the extracellular side. Residues 342 to 360 (LTNTVWLYILYCVSITFMA) traverse the membrane as a helical segment. Topologically, residues 361 to 363 (VGN) are cytoplasmic. The chain crosses the membrane as a helical span at residues 364–382 (LVYWYIYGLGIYIWFMTIR). Over 383-404 (LFAFTHTNRNDIKLSLPQYYKS) the chain is Extracellular. A helical membrane pass occupies residues 405–423 (FFMALGLSGICLYVIHLLT). At 424–426 (ADW) the chain is on the cytoplasmic side. A helical transmembrane segment spans residues 427–447 (YTLVVVVCIGSLSWCLFYRFR).

Its subcellular location is the cell membrane. In terms of biological role, probably part of the ABC transporter SkfEF involved in the export of the bacteriocin SKF. Probably responsible for the translocation of bacteriocin SkfA across the membrane. The polypeptide is Putative bacteriocin-SkfA transport system permease protein SkfF (Bacillus subtilis (strain 168)).